Consider the following 218-residue polypeptide: Ribosome maturation factor RimM (218 aa).

The PRC barrel domain maps to 141–214; that stretch reads GELWWDRDLV…HIVVDPPPGL (74 aa).

Belongs to the RimM family. In terms of assembly, binds ribosomal protein uS19.

The protein resides in the cytoplasm. An accessory protein needed during the final step in the assembly of 30S ribosomal subunit, possibly for assembly of the head region. Essential for efficient processing of 16S rRNA. May be needed both before and after RbfA during the maturation of 16S rRNA. It has affinity for free ribosomal 30S subunits but not for 70S ribosomes. In Parafrankia sp. (strain EAN1pec), this protein is Ribosome maturation factor RimM.